The chain runs to 424 residues: Probable ribonuclease FAU-1 (424 aa).

This sequence belongs to the FAU-1 family.

Probable RNase involved in rRNA stability through maturation and/or degradation of precursor rRNAs. Binds to RNA in loop regions with AU-rich sequences. This chain is Probable ribonuclease FAU-1, found in Saccharolobus islandicus (strain L.S.2.15 / Lassen #1) (Sulfolobus islandicus).